Consider the following 167-residue polypeptide: U-scoloptoxin-Er5c (167 aa).

A signal peptide spans 1–22 (MKTNCEFPLLCLLIVLVANVEG). Residues 23–94 (EVEDTGLKMV…KRLWRNWERR (72 aa)) constitute a propeptide that is removed on maturation. 3 RLWRNWE repeats span residues 34-40 (RLWRNWE), 61-67 (RLWRNWE), and 86-92 (RLWRNWE). Glutamine 95 carries the post-translational modification Pyrrolidone carboxylic acid. An RLWRNWE 4; approximate repeat occupies 107–113 (ELWRNWE). The propeptide occupies 112–118 (WEDLKRR). Glutamine 119 carries the pyrrolidone carboxylic acid modification. An RLWRNWE 5 repeat occupies 134 to 140 (RLWRNWE). The propeptide occupies 139–167 (WEDNHATLRKRSADSLSRQKRLGRERGKE). The tract at residues 147–167 (RKRSADSLSRQKRLGRERGKE) is disordered.

It belongs to the scoloptoxin-08 family. Expressed by the venom gland.

It localises to the secreted. In Ethmostigmus rubripes (Giant centipede), this protein is U-scoloptoxin-Er5c.